The following is a 272-amino-acid chain: 2-amino-3,7-dideoxy-D-threo-hept-6-ulosonate synthase (272 aa).

Aspartate 33 acts as the Proton acceptor in catalysis. 1-deoxy-D-threo-hexo-2,5-diulose 6-phosphate-binding positions include 33–37 (DHGVS) and 153–155 (YPR). The active-site Proton donor is tyrosine 153. Residue lysine 184 is the Schiff-base intermediate with substrate of the active site. 1-deoxy-D-threo-hexo-2,5-diulose 6-phosphate-binding positions include 209 to 210 (GG) and 237 to 238 (GR).

It belongs to the DeoC/FbaB aldolase family. ADHS subfamily. In terms of assembly, homodecamer.

The catalysed reaction is 1-deoxy-D-threo-hexo-2,5-diulose 6-phosphate + L-aspartate 4-semialdehyde = 2,3-dioxopropyl phosphate + 2-amino-2,3,7-trideoxy-D-lyxo-hept-6-ulosonate. Its function is as follows. Catalyzes a transaldol reaction between 6-deoxy-5-ketofructose 1-phosphate (DKFP) and L-aspartate semialdehyde (ASA) with an elimination of hydroxypyruvaldehyde phosphate to yield 2-amino-3,7-dideoxy-D-threo-hept-6-ulosonate (ADH). Plays a key role in an alternative pathway of the biosynthesis of 3-dehydroquinate (DHQ), which is involved in the canonical pathway for the biosynthesis of aromatic amino acids. The sequence is that of 2-amino-3,7-dideoxy-D-threo-hept-6-ulosonate synthase from Methanococcus maripaludis (strain C5 / ATCC BAA-1333).